Here is a 322-residue protein sequence, read N- to C-terminus: Transaldolase (322 aa).

Catalysis depends on lysine 132, which acts as the Schiff-base intermediate with substrate. Residues serine 268 and serine 269 each carry the phosphoserine modification.

It belongs to the transaldolase family. Type 1 subfamily. Homodimer.

The catalysed reaction is D-sedoheptulose 7-phosphate + D-glyceraldehyde 3-phosphate = D-erythrose 4-phosphate + beta-D-fructose 6-phosphate. The protein operates within carbohydrate degradation; pentose phosphate pathway; D-glyceraldehyde 3-phosphate and beta-D-fructose 6-phosphate from D-ribose 5-phosphate and D-xylulose 5-phosphate (non-oxidative stage): step 2/3. Its function is as follows. Transaldolase is important for the balance of metabolites in the pentose-phosphate pathway. This Schizosaccharomyces pombe (strain 972 / ATCC 24843) (Fission yeast) protein is Transaldolase (tal1).